The chain runs to 368 residues: Phosphoserine aminotransferase (368 aa).

Residue arginine 44 participates in L-glutamate binding. Pyridoxal 5'-phosphate-binding positions include 78 to 79, tryptophan 104, threonine 157, aspartate 179, and glutamine 202; that span reads AT. Residue lysine 203 is modified to N6-(pyridoxal phosphate)lysine. Residue 244–245 participates in pyridoxal 5'-phosphate binding; it reads NT.

This sequence belongs to the class-V pyridoxal-phosphate-dependent aminotransferase family. SerC subfamily. As to quaternary structure, homodimer. Requires pyridoxal 5'-phosphate as cofactor.

Its subcellular location is the cytoplasm. The catalysed reaction is O-phospho-L-serine + 2-oxoglutarate = 3-phosphooxypyruvate + L-glutamate. It catalyses the reaction 4-(phosphooxy)-L-threonine + 2-oxoglutarate = (R)-3-hydroxy-2-oxo-4-phosphooxybutanoate + L-glutamate. Its pathway is amino-acid biosynthesis; L-serine biosynthesis; L-serine from 3-phospho-D-glycerate: step 2/3. The protein operates within cofactor biosynthesis; pyridoxine 5'-phosphate biosynthesis; pyridoxine 5'-phosphate from D-erythrose 4-phosphate: step 3/5. Functionally, catalyzes the reversible conversion of 3-phosphohydroxypyruvate to phosphoserine and of 3-hydroxy-2-oxo-4-phosphonooxybutanoate to phosphohydroxythreonine. The chain is Phosphoserine aminotransferase from Neisseria meningitidis serogroup A / serotype 4A (strain DSM 15465 / Z2491).